We begin with the raw amino-acid sequence, 425 residues long: MMIALIQMKNMKCTLKVEETTENQELEGVSFDELVALREENAKLKQENEALKAKLHRLESDWTTSDIVEKVELMDAQFDRIGKIMDKMREPMLFKRDEIELHGDLLARVEGLLRIKNERSEIEFEKDIQCIVGRCFSDENKQRNLEKMIKSFEYDDIADTIALRLTHFIQDPGLRSIVYAMCKAAVLNQNYLNIEVQEIVDVTRQKYTHNARDDIDFYPMFTFDANVPEGVFDHIYKKHYLSPQSAALVHTLSHLDVNVDGNGIAMYHIGSATRFAECSVVYVDGRAYKPIRVMAEYAIFPTLPHEYKGRVEGLLLLHGGLAPITLVRVYHDVNVGGLVTGSIAASVSTLLRNCMLYSFDIYFTPNGVCINAVGNNNFVNIIDINCCGRAFGKAPLDQGSWNRNKFMGHKHGRGSKCKQYKKINS.

Residues 29 to 64 (VSFDELVALREENAKLKQENEALKAKLHRLESDWTT) are a coiled coil.

The polypeptide is Non-structural protein 2 (Segment-6) (Banna virus (BAV)).